A 120-amino-acid polypeptide reads, in one-letter code: Putative iron-sulfur cluster insertion protein ErpA (120 aa).

The iron-sulfur cluster site is built by cysteine 49, cysteine 113, and cysteine 115.

The protein belongs to the HesB/IscA family. As to quaternary structure, homodimer. The cofactor is iron-sulfur cluster.

In terms of biological role, required for insertion of 4Fe-4S clusters. The protein is Putative iron-sulfur cluster insertion protein ErpA of Albidiferax ferrireducens (strain ATCC BAA-621 / DSM 15236 / T118) (Rhodoferax ferrireducens).